We begin with the raw amino-acid sequence, 393 residues long: Putative 8-amino-7-oxononanoate synthase (393 aa).

R23 contacts substrate. Residue 110-111 (GY) participates in pyridoxal 5'-phosphate binding. Substrate is bound at residue H135. Pyridoxal 5'-phosphate contacts are provided by residues S183, 208-211 (DEAH), and 239-242 (TLSK). N6-(pyridoxal phosphate)lysine is present on K242. T362 serves as a coordination point for substrate.

This sequence belongs to the class-II pyridoxal-phosphate-dependent aminotransferase family. BioF subfamily. As to quaternary structure, homodimer. It depends on pyridoxal 5'-phosphate as a cofactor.

The enzyme catalyses 6-carboxyhexanoyl-[ACP] + L-alanine + H(+) = (8S)-8-amino-7-oxononanoate + holo-[ACP] + CO2. Its pathway is cofactor biosynthesis; biotin biosynthesis. Catalyzes the decarboxylative condensation of pimeloyl-[acyl-carrier protein] and L-alanine to produce 8-amino-7-oxononanoate (AON), [acyl-carrier protein], and carbon dioxide. The polypeptide is Putative 8-amino-7-oxononanoate synthase (bioF) (Trichodesmium erythraeum (strain IMS101)).